A 282-amino-acid chain; its full sequence is DNA-binding transcriptional repressor YiaJ (282 aa).

Positions 1–20 (MGKEVMGKKENEMAQEKERP) are enriched in basic and acidic residues. Residues 1-21 (MGKEVMGKKENEMAQEKERPA) form a disordered region. The HTH iclR-type domain maps to 23 to 85 (SQSLFRGLML…PAAGSYRLTT (63 aa)). The segment at residues 45 to 64 (LAHLSELAGLNKSTVHRLLQ) is a DNA-binding region (H-T-H motif). The IclR-ED domain maps to 100–272 (IIHIAAPHLE…AQAISNELGF (173 aa)).

In terms of biological role, negatively controls the transcription of the yiaKLMNOPQRS operon, which may be involved in the utilization of 2,3-diketo-L-gulonate. The polypeptide is DNA-binding transcriptional repressor YiaJ (yiaJ) (Escherichia coli (strain K12)).